A 248-amino-acid chain; its full sequence is Isoprenyl transferase (248 aa).

D28 is a catalytic residue. D28 serves as a coordination point for Mg(2+). Substrate-binding positions include 29–32, W33, R41, H45, and 73–75; these read GNGR and SSE. N76 serves as the catalytic Proton acceptor. Residues W77, R79, R196, and 202–204 each bind substrate; that span reads RLS. E215 contributes to the Mg(2+) binding site.

It belongs to the UPP synthase family. In terms of assembly, homodimer. It depends on Mg(2+) as a cofactor.

Catalyzes the condensation of isopentenyl diphosphate (IPP) with allylic pyrophosphates generating different type of terpenoids. The protein is Isoprenyl transferase of Zymomonas mobilis subsp. mobilis (strain ATCC 31821 / ZM4 / CP4).